The chain runs to 34 residues: Mu-theraphotoxin-Df1a (34 aa).

Cystine bridges form between Cys-2–Cys-16, Cys-9–Cys-21, and Cys-15–Cys-28. The residue at position 34 (Phe-34) is a Phenylalanine amide.

Belongs to the neurotoxin 10 (Hwtx-1) family. 54 (ProTx-1) subfamily. Post-translationally, C-terminal amidation is important for the high potency of the toxin. As to expression, expressed by the venom gland.

It is found in the secreted. Functionally, inhibits sodium channel Nav1.7/SCN9A with high potency (IC(50)=117 nM) and Nav1.2/SCN2A, Nav1.3/SCN3A, Nav1.6/SCN8A and Nav1.5/SCN5 with weaker potency. Also inhibits voltage-gated calcium channel Cav3.1/CACNA1G, Cav3.2/CACNA1H and Cav3.3/CACNA1I. In Davus fasciatus (Costa Rican tiger rump), this protein is Mu-theraphotoxin-Df1a.